The primary structure comprises 142 residues: Large ribosomal subunit protein uL11 (142 aa).

This sequence belongs to the universal ribosomal protein uL11 family. Part of the ribosomal stalk of the 50S ribosomal subunit. Interacts with L10 and the large rRNA to form the base of the stalk. L10 forms an elongated spine to which L12 dimers bind in a sequential fashion forming a multimeric L10(L12)X complex. One or more lysine residues are methylated.

Forms part of the ribosomal stalk which helps the ribosome interact with GTP-bound translation factors. In Mycobacterium ulcerans (strain Agy99), this protein is Large ribosomal subunit protein uL11.